Consider the following 512-residue polypeptide: Neuronal acetylcholine receptor subunit alpha-2 (512 aa).

A signal peptide spans 1–27 (MAPSHPAFQFWIHLYLWCLLLMPAVLA). Residues 28 to 241 (QQGSHTHAED…VTYYFVIRRL (214 aa)) lie on the Extracellular side of the membrane. N-linked (GlcNAc...) asparagine glycans are attached at residues asparagine 56 and asparagine 106. Cysteine 160 and cysteine 174 are joined by a disulfide. N-linked (GlcNAc...) asparagine glycosylation occurs at asparagine 212. Residues cysteine 224 and cysteine 225 are joined by a disulfide bond. Transmembrane regions (helical) follow at residues 242 to 266 (PLFY…VFYL), 274 to 292 (ITLC…LLIT), and 308 to 329 (YLLF…VLNV). The Cytoplasmic portion of the chain corresponds to 330 to 485 (HHRSPSTHNM…WKYVAMVVDR (156 aa)). The helical transmembrane segment at 486–504 (IFLWLFIIVCFLGTIGLFL) threads the bilayer.

The protein belongs to the ligand-gated ion channel (TC 1.A.9) family. Acetylcholine receptor (TC 1.A.9.1) subfamily. Alpha-2/CHRNA2 sub-subfamily. Neuronal AChR is composed of two different types of subunits: alpha and non-alpha (beta). CHRNA2/alpha-2 subunit can be combined to CHRNB2/beta-2 or CHRNB4/beta-4 to give rise to functional receptors. Both CHRNA2:CHRNB2 and CHRNA2:CHRNB4 nAChR complexes are heteropentamers with two subtypes: LS (low agonist sensitivity) with a (CHRNA2)3:(CHRNB2/4)2 and HS (high agonist sensitivity) with a (CHRNA2)2:(CHRNB2/4)3 stoichiometries; the subtypes differ in their subunit binding interfaces which are involved in ligand binding.

The protein resides in the synaptic cell membrane. The protein localises to the cell membrane. It carries out the reaction Ca(2+)(in) = Ca(2+)(out). The catalysed reaction is K(+)(in) = K(+)(out). It catalyses the reaction Na(+)(in) = Na(+)(out). In terms of biological role, component of neuronal acetylcholine receptors (nAChRs) that function as pentameric, ligand-gated cation channels with high calcium permeability among other activities. nAChRs are excitatory neurotrasnmitter receptors formed by a collection of nAChR subunits known to mediate synaptic transmission in the nervous system and the neuromuscular junction. Each nAchR subunit confers differential attributes to channel properties, including activation, deactivation and desensitization kinetics, pH sensitivity, cation permeability, and binding to allosteric modulators. CHRNA2 forms heteropentameric neuronal acetylcholine receptors with CHRNB2 and CHRNB4 and plays a role in nicotine dependence. The chain is Neuronal acetylcholine receptor subunit alpha-2 (Chrna2) from Mus musculus (Mouse).